The primary structure comprises 399 residues: uncharacterized protein (399 aa).

This is an uncharacterized protein from Aquifex aeolicus (strain VF5).